The chain runs to 528 residues: Glucose-6-phosphate isomerase (528 aa).

The Proton donor role is filled by E322. Residues H351 and K455 contribute to the active site.

It belongs to the GPI family.

It is found in the cytoplasm. The enzyme catalyses alpha-D-glucose 6-phosphate = beta-D-fructose 6-phosphate. The protein operates within carbohydrate biosynthesis; gluconeogenesis. Its pathway is carbohydrate degradation; glycolysis; D-glyceraldehyde 3-phosphate and glycerone phosphate from D-glucose: step 2/4. In terms of biological role, catalyzes the reversible isomerization of glucose-6-phosphate to fructose-6-phosphate. The polypeptide is Glucose-6-phosphate isomerase (Trichormus variabilis (strain ATCC 29413 / PCC 7937) (Anabaena variabilis)).